We begin with the raw amino-acid sequence, 831 residues long: Translation initiation factor IF-2 (831 aa).

The disordered stretch occupies residues 116 to 157 (IEPLETDKEVEQKQQNTEENKVEVSAKIVQDDEDIPSQIPKK). Over residues 117 to 139 (EPLETDKEVEQKQQNTEENKVEV) the composition is skewed to basic and acidic residues. A tr-type G domain is found at 329–499 (TRAPVVTVMG…LLIAEMQDLK (171 aa)). Positions 338 to 345 (GHVDHGKT) are G1. Residue 338-345 (GHVDHGKT) coordinates GTP. The G2 stretch occupies residues 363–367 (GITQH). The G3 stretch occupies residues 385 to 388 (DTPG). Residues 385–389 (DTPGH) and 439–442 (NKID) each bind GTP. Residues 439–442 (NKID) are G4. The segment at 475 to 477 (SAL) is G5.

Belongs to the TRAFAC class translation factor GTPase superfamily. Classic translation factor GTPase family. IF-2 subfamily.

Its subcellular location is the cytoplasm. In terms of biological role, one of the essential components for the initiation of protein synthesis. Protects formylmethionyl-tRNA from spontaneous hydrolysis and promotes its binding to the 30S ribosomal subunits. Also involved in the hydrolysis of GTP during the formation of the 70S ribosomal complex. The protein is Translation initiation factor IF-2 of Rickettsia conorii (strain ATCC VR-613 / Malish 7).